An 80-amino-acid polypeptide reads, in one-letter code: UPF0291 protein YlaC (80 aa).

This sequence belongs to the UPF0291 family.

It localises to the cytoplasm. This Lactococcus lactis subsp. lactis (strain IL1403) (Streptococcus lactis) protein is UPF0291 protein YlaC (ylcA).